The sequence spans 485 residues: UDP-N-acetylmuramate--L-alanine ligase (485 aa).

G129–T135 serves as a coordination point for ATP.

It belongs to the MurCDEF family.

The protein localises to the cytoplasm. The catalysed reaction is UDP-N-acetyl-alpha-D-muramate + L-alanine + ATP = UDP-N-acetyl-alpha-D-muramoyl-L-alanine + ADP + phosphate + H(+). The protein operates within cell wall biogenesis; peptidoglycan biosynthesis. Functionally, cell wall formation. This chain is UDP-N-acetylmuramate--L-alanine ligase, found in Vibrio campbellii (strain ATCC BAA-1116).